The sequence spans 383 residues: Chaperone protein DnaJ (383 aa).

The region spanning 5-70 (DYYELLGVEK…QKRAAYDRFG (66 aa)) is the J domain. The CR-type zinc-finger motif lies at 137–215 (GKTATVKVPS…CGGSGRTRKE (79 aa)). Zn(2+) contacts are provided by Cys-150, Cys-153, Cys-167, Cys-170, Cys-189, Cys-192, Cys-203, and Cys-206. CXXCXGXG motif repeat units lie at residues 150–157 (CEDCKGTG), 167–174 (CSACHGHG), 189–196 (CPTCQGMG), and 203–210 (CRSCGGSG).

This sequence belongs to the DnaJ family. In terms of assembly, homodimer. It depends on Zn(2+) as a cofactor.

Its subcellular location is the cytoplasm. Functionally, participates actively in the response to hyperosmotic and heat shock by preventing the aggregation of stress-denatured proteins and by disaggregating proteins, also in an autonomous, DnaK-independent fashion. Unfolded proteins bind initially to DnaJ; upon interaction with the DnaJ-bound protein, DnaK hydrolyzes its bound ATP, resulting in the formation of a stable complex. GrpE releases ADP from DnaK; ATP binding to DnaK triggers the release of the substrate protein, thus completing the reaction cycle. Several rounds of ATP-dependent interactions between DnaJ, DnaK and GrpE are required for fully efficient folding. Also involved, together with DnaK and GrpE, in the DNA replication of plasmids through activation of initiation proteins. The protein is Chaperone protein DnaJ of Paramagnetospirillum magneticum (strain ATCC 700264 / AMB-1) (Magnetospirillum magneticum).